A 396-amino-acid chain; its full sequence is Succinyl-diaminopimelate desuccinylase (396 aa).

A Zn(2+)-binding site is contributed by H74. D76 is a catalytic residue. D107 contacts Zn(2+). Residue E142 is the Proton acceptor of the active site. Residues E143, E171, and H360 each contribute to the Zn(2+) site.

It belongs to the peptidase M20A family. DapE subfamily. As to quaternary structure, homodimer. Zn(2+) is required as a cofactor. The cofactor is Co(2+).

It carries out the reaction N-succinyl-(2S,6S)-2,6-diaminopimelate + H2O = (2S,6S)-2,6-diaminopimelate + succinate. The protein operates within amino-acid biosynthesis; L-lysine biosynthesis via DAP pathway; LL-2,6-diaminopimelate from (S)-tetrahydrodipicolinate (succinylase route): step 3/3. In terms of biological role, catalyzes the hydrolysis of N-succinyl-L,L-diaminopimelic acid (SDAP), forming succinate and LL-2,6-diaminopimelate (DAP), an intermediate involved in the bacterial biosynthesis of lysine and meso-diaminopimelic acid, an essential component of bacterial cell walls. The protein is Succinyl-diaminopimelate desuccinylase of Methylobacterium sp. (strain 4-46).